The primary structure comprises 528 residues: Protein arginine N-methyltransferase 3 (528 aa).

The interval 1–43 (MCSLAAGNGRGAELGPEPLELSDSGDDAGWEDEDADTEPAHGR) is disordered. Cys2 is modified (N-acetylcysteine). Residues Ser22 and Ser24 each carry the phosphoserine modification. Residues 23-37 (DSGDDAGWEDEDADT) show a composition bias toward acidic residues. Residues 46-69 (TPCLFCDRLFASAEETFSHCKLEH) form a C2H2-type zinc finger. A Phosphoserine modification is found at Ser169. The segment at 184–528 (MKQFAQDFVM…NSSTQTYSLQ (345 aa)) is mediates interaction with ALDH1A1. One can recognise an SAM-dependent MTase PRMT-type domain in the interval 214 to 528 (DGVYFSSYGH…NSSTQTYSLQ (315 aa)). Arg236, Gly260, Asp282, Ser284, Ile310, and Glu311 together coordinate S-adenosyl-L-homocysteine. Catalysis depends on residues Glu326 and Glu335.

It belongs to the class I-like SAM-binding methyltransferase superfamily. Protein arginine N-methyltransferase family. Monomer and homodimer. Interacts with EPB41L3 (via FERM domain); the interaction is direct and inhibits the protein-arginine N-methyltransferase activity of PRMT3. Interacts with the 40S ribosomal protein RPS2. Interacts with ALDH1A1; the interaction is direct, inhibits ALDH1A1 aldehyde dehydrogenase activity and is independent of the methyltransferase activity of PRMT3.

It localises to the cytoplasm. The protein localises to the cytosol. The protein resides in the nucleus. It catalyses the reaction L-arginyl-[protein] + S-adenosyl-L-methionine = N(omega)-methyl-L-arginyl-[protein] + S-adenosyl-L-homocysteine + H(+). The enzyme catalyses L-arginyl-[protein] + 2 S-adenosyl-L-methionine = N(omega),N(omega)-dimethyl-L-arginyl-[protein] + 2 S-adenosyl-L-homocysteine + 2 H(+). With respect to regulation, inhibited by N-ethylmaleimide and high concentrations of zinc chloride. Its function is as follows. Protein-arginine N-methyltransferase that catalyzes both the monomethylation and asymmetric dimethylation of the guanidino nitrogens of arginine residues in target proteins, and therefore falls into the group of type I methyltransferases. Catalyzes the asymmetric arginine dimethylation at multiple sites in the Arg/Gly-rich region of small ribosomal subunit protein uS5/RPS2. Also appears to methylate other ribosomal proteins. May regulate retinoic acid synthesis and signaling by inhibiting ALDH1A1 retinal dehydrogenase activity. Contributes to methylation of histone H4 'Arg-3', a specific tag for epigenetic transcriptional activation. Promotes osteogenesis. The polypeptide is Protein arginine N-methyltransferase 3 (Mus musculus (Mouse)).